The chain runs to 213 residues: MPVHEIRHPLIRHKLGIMRRADLSTKSFRELSQEVAALLTYEATKDMPLAPASVEGWCGTVEVDKITGKKVTVVPILRAGIGMLDGVLSLIPGAKVSVVGVARNEETLQAHTYLERLVGELDQRLALIVDPMLATGGSMVAAIDMLKRAGCREIRALTLVSAPEGIDAVLKAHPDVQIYTASIDQGLNENGYIMPGLGDAGDRIFGTTQKHAE.

Residues Arg78, Arg103, and 130–138 (DPMLATGGS) contribute to the 5-phospho-alpha-D-ribose 1-diphosphate site. Residues Ile193 and 198-200 (GDA) each bind uracil. Residue Asp199 coordinates 5-phospho-alpha-D-ribose 1-diphosphate.

The protein belongs to the UPRTase family. It depends on Mg(2+) as a cofactor.

It catalyses the reaction UMP + diphosphate = 5-phospho-alpha-D-ribose 1-diphosphate + uracil. Its pathway is pyrimidine metabolism; UMP biosynthesis via salvage pathway; UMP from uracil: step 1/1. Its activity is regulated as follows. Allosterically activated by GTP. Catalyzes the conversion of uracil and 5-phospho-alpha-D-ribose 1-diphosphate (PRPP) to UMP and diphosphate. The sequence is that of Uracil phosphoribosyltransferase from Bordetella pertussis (strain Tohama I / ATCC BAA-589 / NCTC 13251).